A 274-amino-acid polypeptide reads, in one-letter code: 4-hydroxy-tetrahydrodipicolinate reductase (274 aa).

12–17 (GAAGRM) is a binding site for NAD(+). Arginine 39 provides a ligand contact to NADP(+). NAD(+)-binding positions include 102–104 (GTT) and 126–129 (SGNM). Histidine 160 serves as the catalytic Proton donor/acceptor. A (S)-2,3,4,5-tetrahydrodipicolinate-binding site is contributed by histidine 161. Lysine 164 serves as the catalytic Proton donor. Residue 170-171 (GT) participates in (S)-2,3,4,5-tetrahydrodipicolinate binding.

The protein belongs to the DapB family.

It is found in the cytoplasm. It carries out the reaction (S)-2,3,4,5-tetrahydrodipicolinate + NAD(+) + H2O = (2S,4S)-4-hydroxy-2,3,4,5-tetrahydrodipicolinate + NADH + H(+). It catalyses the reaction (S)-2,3,4,5-tetrahydrodipicolinate + NADP(+) + H2O = (2S,4S)-4-hydroxy-2,3,4,5-tetrahydrodipicolinate + NADPH + H(+). The protein operates within amino-acid biosynthesis; L-lysine biosynthesis via DAP pathway; (S)-tetrahydrodipicolinate from L-aspartate: step 4/4. Catalyzes the conversion of 4-hydroxy-tetrahydrodipicolinate (HTPA) to tetrahydrodipicolinate. This is 4-hydroxy-tetrahydrodipicolinate reductase from Rhizobium rhizogenes (strain K84 / ATCC BAA-868) (Agrobacterium radiobacter).